A 150-amino-acid chain; its full sequence is Large ribosomal subunit protein bL9 (150 aa).

The protein belongs to the bacterial ribosomal protein bL9 family.

Binds to the 23S rRNA. The protein is Large ribosomal subunit protein bL9 of Desulforudis audaxviator (strain MP104C).